A 470-amino-acid polypeptide reads, in one-letter code: Probable tocopherol cyclase, chloroplastic (470 aa).

A chloroplast-targeting transit peptide spans 1 to 61 (MDLAAAAVAV…APTPRDRALR (61 aa)). A disordered region spans residues 14–48 (RPAPPPRRCAPRRHRRALAPRAASSSPSPSTAVAA). A compositionally biased stretch (basic residues) spans 22-31 (CAPRRHRRAL). The segment covering 32 to 48 (APRAASSSPSPSTAVAA) has biased composition (low complexity).

As to expression, expressed in the roots, stems, leaves and spikelets.

The protein localises to the plastid. Its subcellular location is the chloroplast. It is found in the plastoglobule. It functions in the pathway cofactor biosynthesis; tocopherol biosynthesis. Its function is as follows. Involved in the synthesis of both tocopherols and tocotrienols (vitamin E), which presumably protect photosynthetic complexes from oxidative stress. Catalyzes the conversion of 2-methyl-6-phytyl-1,4-hydroquinone and 2,3-dimethyl-5-phytyl-1,4-hydroquinone (DMPQ) to delta- and gamma-tocopherol respectively. Also converts 2,3-dimethyl-5-geranylgeranyl-1,4-hydroquinone (DMGQ) to gamma-tocotrienol. The sequence is that of Probable tocopherol cyclase, chloroplastic (VTE1) from Oryza sativa subsp. japonica (Rice).